The chain runs to 104 residues: Increased recombination centers protein 13 (104 aa).

The helical transmembrane segment at 63-83 threads the bilayer; sequence LVHLFSYVFFLFLLKICVDVL.

It is found in the membrane. Functionally, may be involved in a pathway contributing to genomic integrity. This Saccharomyces cerevisiae (strain ATCC 204508 / S288c) (Baker's yeast) protein is Increased recombination centers protein 13 (IRC13).